A 135-amino-acid chain; its full sequence is Helix-loop-helix protein 2 (135 aa).

The interval 1 to 80 is disordered; it reads MMLSPDQAAD…RRRATAKYRS (80 aa). Over residues 10-21 the composition is skewed to basic and acidic residues; sequence DSDHPSSAHSDP. The segment covering 68-80 has biased composition (basic residues); sequence KRRRRRATAKYRS. In terms of domain architecture, bHLH spans 77 to 129; the sequence is KYRSAHATRERIRVEAFNLAFAELRKLLPTLPPDKKLSKIEILRLAICYISYL.

Homodimer. Interacts and may form heterodimers with STAT3.

It localises to the nucleus. Functionally, transcription factor which binds the E box motif 5'-CA[TC][AG]TG-3'. Involved in regulating energy expenditure, body mass, voluntary physical activity, mating behavior and reproductive longevity, acting through the hypothalamic-pituitary-gonadal axis. Acts as a transcriptional activator of target genes, including NDN, PCSK1, MC4R. Is also a transcriptional activator of KISS1. May act centrally to regulate function of both white and brown adipose tissue. Together with NHLH1, required to maintain migration and survival of cells in the anterior extramural migration stream (aes), which forms the precerebellar nuclei. Also, in concert with NHLH1, may determine fate of gonadotropin releasing hormone-1 (GnRH-1) neurons. The chain is Helix-loop-helix protein 2 (NHLH2) from Homo sapiens (Human).